The following is a 340-amino-acid chain: Uroporphyrinogen decarboxylase (340 aa).

Substrate is bound by residues 21-25, D71, Y148, S203, and H316; that span reads RQAGR.

It belongs to the uroporphyrinogen decarboxylase family. As to quaternary structure, homodimer.

Its subcellular location is the cytoplasm. The catalysed reaction is uroporphyrinogen III + 4 H(+) = coproporphyrinogen III + 4 CO2. It participates in porphyrin-containing compound metabolism; protoporphyrin-IX biosynthesis; coproporphyrinogen-III from 5-aminolevulinate: step 4/4. Functionally, catalyzes the decarboxylation of four acetate groups of uroporphyrinogen-III to yield coproporphyrinogen-III. The chain is Uroporphyrinogen decarboxylase from Campylobacter concisus (strain 13826).